The sequence spans 254 residues: NH(3)-dependent NAD(+) synthetase (254 aa).

An ATP-binding site is contributed by 32-39 (GISGGIDS). Asp-38 serves as a coordination point for Mg(2+). Arg-113 lines the deamido-NAD(+) pocket. An ATP-binding site is contributed by Thr-133. Glu-138 contributes to the Mg(2+) binding site. 2 residues coordinate deamido-NAD(+): Lys-146 and Asp-153. Lys-162 and Thr-184 together coordinate ATP. 244-245 (HK) lines the deamido-NAD(+) pocket.

Belongs to the NAD synthetase family. As to quaternary structure, homodimer.

The enzyme catalyses deamido-NAD(+) + NH4(+) + ATP = AMP + diphosphate + NAD(+) + H(+). It functions in the pathway cofactor biosynthesis; NAD(+) biosynthesis; NAD(+) from deamido-NAD(+) (ammonia route): step 1/1. Its function is as follows. Catalyzes the ATP-dependent amidation of deamido-NAD to form NAD. Uses ammonia as a nitrogen source. The sequence is that of NH(3)-dependent NAD(+) synthetase from Thermococcus kodakarensis (strain ATCC BAA-918 / JCM 12380 / KOD1) (Pyrococcus kodakaraensis (strain KOD1)).